A 218-amino-acid polypeptide reads, in one-letter code: Large ribosomal subunit protein uL3 (218 aa).

This sequence belongs to the universal ribosomal protein uL3 family. Part of the 50S ribosomal subunit. Forms a cluster with proteins L14 and L19.

Its function is as follows. One of the primary rRNA binding proteins, it binds directly near the 3'-end of the 23S rRNA, where it nucleates assembly of the 50S subunit. This chain is Large ribosomal subunit protein uL3, found in Mycolicibacterium gilvum (strain PYR-GCK) (Mycobacterium gilvum (strain PYR-GCK)).